The chain runs to 416 residues: Tumor necrosis factor receptor superfamily member 19 (416 aa).

Positions 1–29 are cleaved as a signal peptide; the sequence is MALKVLPLHRTVLFAAILFLLHLACKVSC. Topologically, residues 30-170 are extracellular; sequence ETGDCRQQEF…TVSSPRDTAL (141 aa). TNFR-Cys repeat units follow at residues 33–72 and 74–114; these read DCRQ…DAQC and PCRP…DAVC. Cystine bridges form between Cys34–Cys46, Cys49–Cys62, Cys52–Cys72, Cys75–Cys89, Cys92–Cys106, Cys95–Cys114, Cys117–Cys135, and Cys138–Cys149. N-linked (GlcNAc...) asparagine glycosylation occurs at Asn105. A TNFR-Cys 3; truncated repeat occupies 116-149; the sequence is DCLPGFYRKTKLVGFQDMECVPCGDPPPPYEPHC. A helical membrane pass occupies residues 171-191; sequence AAVICSALATVLLALLILCVI. Residues 192–416 are Cytoplasmic-facing; sequence YCKRQFMEKK…LAMPTAFQDA (225 aa). Residues 321–416 are disordered; that stretch reads LCDSYPELTG…LAMPTAFQDA (96 aa). 3 stretches are compositionally biased toward polar residues: residues 331–351, 360–370, and 381–396; these read EDTN…SSGG, LESSGNVSEST, and VWEQ…TPSQ.

As to quaternary structure, associates with TRAF1, TRAF2, TRAF3 and TRAF5. Interacts with LINGO1. In terms of tissue distribution, highly expressed in adult brain, and in embryos from day 11-17, but not earlier. Detected in embryonic brain and epithelium, and at lower levels in adult heart, lung and liver. In neonatal mice, mainly in hair follicles and neuron-like cells in the cerebellum, but not in the skin epidermis. Isoform 3 was found in embryonic day 17.5 skin but not in brain and liver.

Its subcellular location is the cell membrane. The protein localises to the secreted. In terms of biological role, can mediate activation of c-Jun and NF-kappa-B. May promote caspase-independent cell death. Isoform 2 and isoform 3 may act as decoy receptors. This Mus musculus (Mouse) protein is Tumor necrosis factor receptor superfamily member 19 (Tnfrsf19).